The primary structure comprises 115 residues: ATP synthase subunits region ORF 7 (115 aa).

The sequence is that of ATP synthase subunits region ORF 7 from Fuscovulum blasticum (Rhodobacter blasticus).